We begin with the raw amino-acid sequence, 131 residues long: Small ribosomal subunit protein uS11 (131 aa).

The protein belongs to the universal ribosomal protein uS11 family. As to quaternary structure, part of the 30S ribosomal subunit. Interacts with proteins S7 and S18. Binds to IF-3.

Its function is as follows. Located on the platform of the 30S subunit, it bridges several disparate RNA helices of the 16S rRNA. Forms part of the Shine-Dalgarno cleft in the 70S ribosome. The protein is Small ribosomal subunit protein uS11 of Chromobacterium violaceum (strain ATCC 12472 / DSM 30191 / JCM 1249 / CCUG 213 / NBRC 12614 / NCIMB 9131 / NCTC 9757 / MK).